The chain runs to 147 residues: Putative fibroblast growth factor 1 (147 aa).

N25 is a heparin binding site. The segment at 117–133 (KKNGKMKRGPRTHIGQK) is heparin-binding.

It belongs to the heparin-binding growth factors family.

It is found in the secreted. The protein localises to the cytoplasm. The protein resides in the cell cortex. Its subcellular location is the cytosol. It localises to the nucleus. Its function is as follows. Plays an important role in the regulation of cell survival, cell division, angiogenesis, cell differentiation and cell migration. Functions as a potent mitogen in vitro. Acts as a ligand for FGFR1 and integrins. Binds to FGFR1 in the presence of heparin leading to FGFR1 dimerization and activation via sequential autophosphorylation on tyrosine residues which act as docking sites for interacting proteins, leading to the activation of several signaling cascades. Binds to integrins. Its binding to integrins and subsequent ternary complex formation with integrins and FGFR1 are essential for FGF1 signaling. The chain is Putative fibroblast growth factor 1 (fgf1) from Danio rerio (Zebrafish).